Consider the following 62-residue polypeptide: Small acidic protein 1 (62 aa).

Interacts with the COP9 signalosome. As to expression, expressed in roots, flowers, siliques, stems, leaves and seeds. In flowers, detected in petals, anthers and pistils.

In terms of biological role, mediates responses to the synthetic auxin 2,4-dichlorophenoxyacetic acid (2,4-D). Not involved in the response to indole-3-acetic acid (IAA). Interacts with RUB modification-related components and may regulate the cullin-ring ubiquitin E3 ligase complex (CRL) activity. The protein is Small acidic protein 1 (SMAP1) of Arabidopsis thaliana (Mouse-ear cress).